Consider the following 581-residue polypeptide: Arginine--tRNA ligase (581 aa).

A 'HIGH' region motif is present at residues P122–H132.

The protein belongs to the class-I aminoacyl-tRNA synthetase family. In terms of assembly, monomer.

The protein resides in the cytoplasm. The catalysed reaction is tRNA(Arg) + L-arginine + ATP = L-arginyl-tRNA(Arg) + AMP + diphosphate. The chain is Arginine--tRNA ligase from Francisella tularensis subsp. tularensis (strain WY96-3418).